A 419-amino-acid chain; its full sequence is uncharacterized protein (419 aa).

This is an uncharacterized protein from Caenorhabditis elegans.